A 421-amino-acid polypeptide reads, in one-letter code: 4-hydroxy-3-methylbut-2-en-1-yl diphosphate synthase (flavodoxin) (421 aa).

[4Fe-4S] cluster-binding residues include cysteine 300, cysteine 303, cysteine 346, and glutamate 353.

The protein belongs to the IspG family. The cofactor is [4Fe-4S] cluster.

The enzyme catalyses (2E)-4-hydroxy-3-methylbut-2-enyl diphosphate + oxidized [flavodoxin] + H2O + 2 H(+) = 2-C-methyl-D-erythritol 2,4-cyclic diphosphate + reduced [flavodoxin]. Its pathway is isoprenoid biosynthesis; isopentenyl diphosphate biosynthesis via DXP pathway; isopentenyl diphosphate from 1-deoxy-D-xylulose 5-phosphate: step 5/6. Its function is as follows. Converts 2C-methyl-D-erythritol 2,4-cyclodiphosphate (ME-2,4cPP) into 1-hydroxy-2-methyl-2-(E)-butenyl 4-diphosphate. This chain is 4-hydroxy-3-methylbut-2-en-1-yl diphosphate synthase (flavodoxin), found in Laribacter hongkongensis (strain HLHK9).